Consider the following 206-residue polypeptide: CASP-like protein 4B2 (206 aa).

Composition is skewed to low complexity over residues 1–12 and 24–36; these read MAMVPADADAAA and SSQNGAPNSAAAA. The tract at residues 1–42 is disordered; sequence MAMVPADADAAAKPPPDVEKPDYSSQNGAPNSAAAAAGGGGG. At 1–60 the chain is on the cytoplasmic side; it reads MAMVPADADAAAKPPPDVEKPDYSSQNGAPNSAAAAAGGGGGGVVDSVVARWRREDMLDK. A helical membrane pass occupies residues 61 to 81; the sequence is SPLALHAAAAAFAFVALVLVA. Residues 82 to 99 are Extracellular-facing; it reads SNQHGDWMEFDRYQEYRY. A helical transmembrane segment spans residues 100 to 120; sequence LLAIAALAFAYSLAQALRHAL. Residues 121–138 are Cytoplasmic-facing; the sequence is RMRRGVDPVPTASGRLLD. A helical transmembrane segment spans residues 139-159; the sequence is FASDQVVAYLLMSALSAATPI. Over 160–174 the chain is Extracellular; that stretch reads TNRMRSAVINRFTDT. Residues 175–195 form a helical membrane-spanning segment; sequence TAAAISMAFLAFVSLALSAIV. Over 196 to 206 the chain is Cytoplasmic; it reads SGYKLSKQTYM.

It belongs to the Casparian strip membrane proteins (CASP) family. Homodimer and heterodimers.

The protein localises to the cell membrane. The protein is CASP-like protein 4B2 of Oryza sativa subsp. japonica (Rice).